Here is a 69-residue protein sequence, read N- to C-terminus: Dermaseptin-H3 (69 aa).

Residues 1–22 (MAFLKKSLFLVLFLGMVSLSIC) form the signal peptide. The propeptide occupies 23–43 (EEEKRENEDEEKQEDDEQSEM). The tract at residues 24 to 44 (EEKRENEDEEKQEDDEQSEMK) is disordered. A compositionally biased stretch (acidic residues) spans 30 to 40 (EDEEKQEDDEQ). Position 66 is a leucine amide (leucine 66). The propeptide occupies 68-69 (EQ).

The protein belongs to the frog skin active peptide (FSAP) family. Dermaseptin subfamily. Expressed by the skin glands.

It is found in the secreted. Functionally, possesses a potent antimicrobial activity against Gram-positive and Gram-negative bacteria. Probably acts by disturbing membrane functions with its amphipathic structure. The sequence is that of Dermaseptin-H3 from Pithecopus azureus (Orange-legged monkey tree frog).